The sequence spans 196 residues: dITP/XTP pyrophosphatase (196 aa).

7-12 (TGNAGK) contacts substrate. Residues glutamate 39 and aspartate 68 each contribute to the Mg(2+) site. The active-site Proton acceptor is the aspartate 68. Substrate-binding positions include serine 69, 153–156 (HGYD), lysine 176, and 181–182 (HR).

The protein belongs to the HAM1 NTPase family. In terms of assembly, homodimer. The cofactor is Mg(2+).

It catalyses the reaction XTP + H2O = XMP + diphosphate + H(+). It carries out the reaction dITP + H2O = dIMP + diphosphate + H(+). The catalysed reaction is ITP + H2O = IMP + diphosphate + H(+). In terms of biological role, pyrophosphatase that catalyzes the hydrolysis of nucleoside triphosphates to their monophosphate derivatives, with a high preference for the non-canonical purine nucleotides XTP (xanthosine triphosphate), dITP (deoxyinosine triphosphate) and ITP. Seems to function as a house-cleaning enzyme that removes non-canonical purine nucleotides from the nucleotide pool, thus preventing their incorporation into DNA/RNA and avoiding chromosomal lesions. This is dITP/XTP pyrophosphatase from Thioalkalivibrio sulfidiphilus (strain HL-EbGR7).